Reading from the N-terminus, the 338-residue chain is Nicotinate-nucleotide--dimethylbenzimidazole phosphoribosyltransferase (338 aa).

Residue E305 is the Proton acceptor of the active site.

The protein belongs to the CobT family.

It catalyses the reaction 5,6-dimethylbenzimidazole + nicotinate beta-D-ribonucleotide = alpha-ribazole 5'-phosphate + nicotinate + H(+). It functions in the pathway nucleoside biosynthesis; alpha-ribazole biosynthesis; alpha-ribazole from 5,6-dimethylbenzimidazole: step 1/2. Catalyzes the synthesis of alpha-ribazole-5'-phosphate from nicotinate mononucleotide (NAMN) and 5,6-dimethylbenzimidazole (DMB). The sequence is that of Nicotinate-nucleotide--dimethylbenzimidazole phosphoribosyltransferase from Rhizobium etli (strain CIAT 652).